Reading from the N-terminus, the 222-residue chain is 7-cyano-7-deazaguanine synthase (222 aa).

Position 7–17 (Leu7–Leu17) interacts with ATP. 4 residues coordinate Zn(2+): Cys191, Cys199, Cys202, and Cys205.

It belongs to the QueC family. Zn(2+) serves as cofactor.

It carries out the reaction 7-carboxy-7-deazaguanine + NH4(+) + ATP = 7-cyano-7-deazaguanine + ADP + phosphate + H2O + H(+). The protein operates within purine metabolism; 7-cyano-7-deazaguanine biosynthesis. Functionally, catalyzes the ATP-dependent conversion of 7-carboxy-7-deazaguanine (CDG) to 7-cyano-7-deazaguanine (preQ(0)). The polypeptide is 7-cyano-7-deazaguanine synthase (Trichodesmium erythraeum (strain IMS101)).